A 686-amino-acid chain; its full sequence is DNA ligase 1 (686 aa).

Residues 35–39 (DFEYD), 84–85 (SL), and Glu-119 each bind NAD(+). The active-site N6-AMP-lysine intermediate is Lys-121. NAD(+) is bound by residues Arg-142, Glu-177, Lys-293, and Lys-317. Cys-411, Cys-414, Cys-429, and Cys-434 together coordinate Zn(2+). The region spanning 602–686 (RVGEQLAGLT…LAEKGAPPLP (85 aa)) is the BRCT domain.

It belongs to the NAD-dependent DNA ligase family. LigA subfamily. It depends on Mg(2+) as a cofactor. Mn(2+) is required as a cofactor.

The catalysed reaction is NAD(+) + (deoxyribonucleotide)n-3'-hydroxyl + 5'-phospho-(deoxyribonucleotide)m = (deoxyribonucleotide)n+m + AMP + beta-nicotinamide D-nucleotide.. Its function is as follows. DNA ligase that catalyzes the formation of phosphodiester linkages between 5'-phosphoryl and 3'-hydroxyl groups in double-stranded DNA using NAD as a coenzyme and as the energy source for the reaction. It is essential for DNA replication and repair of damaged DNA. This Deinococcus deserti (strain DSM 17065 / CIP 109153 / LMG 22923 / VCD115) protein is DNA ligase 1.